A 1737-amino-acid polypeptide reads, in one-letter code: Intraflagellar transport protein osm-1 (1737 aa).

WD repeat units lie at residues 14 to 53, 63 to 103, 110 to 150, 151 to 189, 191 to 229, 233 to 273, and 511 to 553; these read DGEA…KDRF, GKKS…NEKK, VQPS…SLYK, TDET…QSKI, TLQV…QQFD, QSEK…WDEG, and DQRS…EQVT. TPR repeat units follow at residues 700–737, 803–836, 848–881, 907–940, 979–1012, 1037–1070, and 1137–1170; these read NDTE…KTSY, SQLY…GKAI, VTLE…KKAV, TGYY…NDAI, HGRF…DDVL, RGDL…SDAY, and GTVH…ELAV.

Belongs to the IFT172 family. Component of the IFT complex B composed of at least che-2, che-13, dyf-1, dyf-3, dyf-6, dyf-11, dyf-13, ift-20, ift-74, ift-81, ifta-2, osm-1, osm-5 and osm-6. In terms of tissue distribution, expressed in amphid and phasmid chemosensory neurons, where it appears to concentrate at the base of the transition zones, which correspond to the basal bodies of motile and sensory cilia. Moves in the retrograde direction along cilia and dendrites, suggesting that it is retrieved from the distal endings of the cilia by a retrograde transport pathway that moves it along cilia and then dendrites, back to the neuronal cell body.

The protein localises to the cell projection. Its subcellular location is the cilium. In terms of biological role, component of the intraflagellar transport (IFT) complex B required for transport of proteins in the motile cilium. May be required for ciliary entrance and transport of specific ciliary cargo proteins such as che-3 which are related to motility. Required for the maintenance and formation of chemosensory cilia that detect chemosensory cues. This Caenorhabditis elegans protein is Intraflagellar transport protein osm-1.